Consider the following 66-residue polypeptide: Large ribosomal subunit protein bL31 (66 aa).

4 residues coordinate Zn(2+): C16, C18, C36, and C39.

It belongs to the bacterial ribosomal protein bL31 family. Type A subfamily. As to quaternary structure, part of the 50S ribosomal subunit. Requires Zn(2+) as cofactor.

Its function is as follows. Binds the 23S rRNA. This Leptospira biflexa serovar Patoc (strain Patoc 1 / Ames) protein is Large ribosomal subunit protein bL31.